The chain runs to 623 residues: MSMKGQETRGFQSEVKQLLHLMIHSLYSNKEIFLRELISNASDAADKLRFRALSAPELYEGDGELRVRLSFDKDQRTLTIADNGIGMNREEVIENLGTIAKSGTKAFLESIGSDQAKDSQLIGQFGVGFYSAFIVADKVTVRTRAAGAAADQGVFWESIGEGDYTIADVSKEDRGTEITLHLREGEDEYLDAWRLRSVIGKYSDHIALPVEIETKNEEDGTVTWEKINKAQALWTRSKADVTDEEYKEFYKHIAHDFTDPLSWSHNRVEGKQEYTSLLYIPAQAPWDMWNRDHKHGLKLYVQRVFIMDEAEQFMPNYLRFVRGLIDSNDLPLNVSREILQDSRVTQNLRGALTKRVLQMLEKLAKDDAEGYQKFWQQFGLVLKEGPAEDANNKETIAKLLRFASTQSESSAQTVSLEEYVGRMAEGQEKIYYITADSYAAAKSSPHLELFRKKGIEVLLLSDRIDEWMMSYLTEFDGKPFQSVSKADDALDKLADETEEQKAAEKQLEPFVDRVKTLLGDRVKDVRLTHRLTDTPAIVITDADEMSTQMAKLFAAAGQEAPAVKYIFELNPEHALVKRASDVGDNEQFAEWIDLLLDQALLAERGTLEDPNQFIRRMNKLLSA.

Residues 1 to 336 (MSMKGQETRG…SNDLPLNVSR (336 aa)) are a; substrate-binding. The segment at 337-551 (EILQDSRVTQ…ADEMSTQMAK (215 aa)) is b. The interval 552-623 (LFAAAGQEAP…IRRMNKLLSA (72 aa)) is c.

This sequence belongs to the heat shock protein 90 family. As to quaternary structure, homodimer.

Its subcellular location is the cytoplasm. Its function is as follows. Molecular chaperone. Has ATPase activity. In Serratia proteamaculans (strain 568), this protein is Chaperone protein HtpG.